Reading from the N-terminus, the 330-residue chain is MATH domain and coiled-coil domain-containing protein At3g58210 (330 aa).

The MATH domain occupies Asp-6–Val-133. The stretch at Phe-263–Lys-314 forms a coiled coil.

This is MATH domain and coiled-coil domain-containing protein At3g58210 from Arabidopsis thaliana (Mouse-ear cress).